The sequence spans 206 residues: Phosphoribosylglycinamide formyltransferase (206 aa).

N(1)-(5-phospho-beta-D-ribosyl)glycinamide is bound at residue 13–15 (GTN). Residues 99 to 102 (MIIL) and Asn-121 contribute to the (6R)-10-formyltetrahydrofolate site. Catalysis depends on His-123, which acts as the Proton donor. A (6R)-10-formyltetrahydrofolate-binding site is contributed by Asp-163. Glu-192 contacts N(1)-(5-phospho-beta-D-ribosyl)glycinamide.

It belongs to the GART family.

It catalyses the reaction N(1)-(5-phospho-beta-D-ribosyl)glycinamide + (6R)-10-formyltetrahydrofolate = N(2)-formyl-N(1)-(5-phospho-beta-D-ribosyl)glycinamide + (6S)-5,6,7,8-tetrahydrofolate + H(+). It participates in purine metabolism; IMP biosynthesis via de novo pathway; N(2)-formyl-N(1)-(5-phospho-D-ribosyl)glycinamide from N(1)-(5-phospho-D-ribosyl)glycinamide (10-formyl THF route): step 1/1. This Dictyostelium discoideum (Social amoeba) protein is Phosphoribosylglycinamide formyltransferase (purN).